The sequence spans 358 residues: Uroporphyrinogen decarboxylase (358 aa).

Substrate contacts are provided by residues 27 to 31, Asp77, Tyr154, Ser209, and His330; that span reads RQAGR.

Belongs to the uroporphyrinogen decarboxylase family. As to quaternary structure, homodimer.

The protein resides in the cytoplasm. It carries out the reaction uroporphyrinogen III + 4 H(+) = coproporphyrinogen III + 4 CO2. The protein operates within porphyrin-containing compound metabolism; protoporphyrin-IX biosynthesis; coproporphyrinogen-III from 5-aminolevulinate: step 4/4. Functionally, catalyzes the decarboxylation of four acetate groups of uroporphyrinogen-III to yield coproporphyrinogen-III. The sequence is that of Uroporphyrinogen decarboxylase from Acinetobacter baylyi (strain ATCC 33305 / BD413 / ADP1).